An 803-amino-acid chain; its full sequence is Cation channel sperm-associated auxiliary subunit delta (803 aa).

Residues 1–15 form the signal peptide; it reads MLMLMLAAVATVVRA. The Extracellular segment spans residues 16-720; sequence QTVCRFRTVR…ALPVAEFRPM (705 aa). 7 disulfide bridges follow: Cys-19–Cys-365, Cys-55–Cys-142, Cys-141–Cys-148, Cys-383–Cys-492, Cys-506–Cys-698, Cys-521–Cys-568, and Cys-620–Cys-648. 7 N-linked (GlcNAc...) asparagine glycosylation sites follow: Asn-226, Asn-418, Asn-436, Asn-468, Asn-534, Asn-545, and Asn-626. Residues 721–742 form a helical membrane-spanning segment; sequence TSILLMVTVTLFTMWLAYAIPK. Residues 743-803 lie on the Cytoplasmic side of the membrane; sequence QLRTERGRRL…QIGKKPDIKK (61 aa). Residues 782–803 are disordered; the sequence is SRRVKDQPEKIPQIGKKPDIKK.

The protein belongs to the CATSPERD family. Component of the CatSper complex or CatSpermasome composed of the core pore-forming members CATSPER1, CATSPER2, CATSPER3 and CATSPER4 as well as auxiliary members CATSPERB, CATSPERG, CATSPERD, CATSPERE, CATSPERZ, C2CD6/CATSPERT, SLCO6C1, TMEM249, TMEM262 and EFCAB9. HSPA1 may be an additional auxiliary complex member. The core complex members CATSPER1, CATSPER2, CATSPER3 and CATSPER4 form a heterotetrameric channel. The auxiliary CATSPERB, CATSPERG, CATSPERD and CATSPERE subunits form a pavilion-like structure over the pore which stabilizes the complex through interactions with CATSPER4, CATSPER3, CATSPER1 and CATSPER2 respectively. SLCO6C1 interacts with CATSPERE and TMEM262/CATSPERH interacts with CATSPERB, further stabilizing the complex. C2CD6/CATSPERT interacts at least with CATSPERD and is required for targeting the CatSper complex in the flagellar membrane.

It is found in the cell projection. It localises to the cilium. The protein resides in the flagellum membrane. In terms of biological role, auxiliary component of the CatSper complex, a complex involved in sperm cell hyperactivation. Sperm cell hyperactivation is needed for sperm motility which is essential late in the preparation of sperm for fertilization. Required for CATSPER1 stability before intraflagellar transport and/or incorporation of the CatSper complex channel into the flagellar membrane. The chain is Cation channel sperm-associated auxiliary subunit delta from Rattus norvegicus (Rat).